A 210-amino-acid chain; its full sequence is MDLHNIREDYSKRELSEGDCADNPIEQFERWLDEAVRAEVNEPTAVNVAAVDGRGRPNSRMVLLKEVNSEGFVFFTNYHSRKGRSLDAHPFAAMTFFWPELERQVRVEGRVERLAEKLSDEYFESRPYQSRLGAWASAQSEVIPNKAVLVAKAAAVGLKHPLHVPRPPHWGGYIVIPDLLEFWQGRPSRLHDRIQYRLLDGGWIRERLSP.

Residues 7-10 (REDY) and K65 each bind substrate. FMN contacts are provided by residues 60–65 (RMVLLK), 75–76 (FT), R81, K82, and Q104. Substrate contacts are provided by Y122, R126, and S130. FMN contacts are provided by residues 139 to 140 (QS) and W183. 189–191 (RLH) lines the substrate pocket. R193 serves as a coordination point for FMN.

This sequence belongs to the pyridoxamine 5'-phosphate oxidase family. Homodimer. FMN is required as a cofactor.

It catalyses the reaction pyridoxamine 5'-phosphate + O2 + H2O = pyridoxal 5'-phosphate + H2O2 + NH4(+). The enzyme catalyses pyridoxine 5'-phosphate + O2 = pyridoxal 5'-phosphate + H2O2. Its pathway is cofactor metabolism; pyridoxal 5'-phosphate salvage; pyridoxal 5'-phosphate from pyridoxamine 5'-phosphate: step 1/1. It participates in cofactor metabolism; pyridoxal 5'-phosphate salvage; pyridoxal 5'-phosphate from pyridoxine 5'-phosphate: step 1/1. In terms of biological role, catalyzes the oxidation of either pyridoxine 5'-phosphate (PNP) or pyridoxamine 5'-phosphate (PMP) into pyridoxal 5'-phosphate (PLP). This Neisseria meningitidis serogroup C (strain 053442) protein is Pyridoxine/pyridoxamine 5'-phosphate oxidase.